We begin with the raw amino-acid sequence, 158 residues long: Superoxide dismutase [Cu-Zn] (158 aa).

Cu cation contacts are provided by His46, His48, and His63. Cys57 and Cys149 are oxidised to a cystine. Zn(2+) contacts are provided by His63, His71, His80, and Asp83. Cu cation is bound at residue His120.

It belongs to the Cu-Zn superoxide dismutase family. In terms of assembly, homodimer. Requires Cu cation as cofactor. It depends on Zn(2+) as a cofactor.

It is found in the cytoplasm. It catalyses the reaction 2 superoxide + 2 H(+) = H2O2 + O2. Destroys radicals which are normally produced within the cells and which are toxic to biological systems. The protein is Superoxide dismutase [Cu-Zn] (sod-1) of Onchocerca volvulus.